The following is a 585-amino-acid chain: Arginine--tRNA ligase (585 aa).

Positions 131 to 141 (ANPTGPMHVGH) match the 'HIGH' region motif.

This sequence belongs to the class-I aminoacyl-tRNA synthetase family. As to quaternary structure, monomer.

The protein resides in the cytoplasm. The catalysed reaction is tRNA(Arg) + L-arginine + ATP = L-arginyl-tRNA(Arg) + AMP + diphosphate. The sequence is that of Arginine--tRNA ligase from Rhizobium leguminosarum bv. trifolii (strain WSM2304).